The sequence spans 232 residues: Uracil phosphoribosyltransferase (232 aa).

38–42 contacts GTP; it reads KGLVR. Residues Arg87, Arg112, and 140-148 each bind 5-phospho-alpha-D-ribose 1-diphosphate; that span reads DPMIATGST. Uracil is bound by residues Ile204 and 209–211; that span reads GDA. Asp210 serves as a coordination point for 5-phospho-alpha-D-ribose 1-diphosphate.

Belongs to the UPRTase family. Requires Mg(2+) as cofactor.

It catalyses the reaction UMP + diphosphate = 5-phospho-alpha-D-ribose 1-diphosphate + uracil. The protein operates within pyrimidine metabolism; UMP biosynthesis via salvage pathway; UMP from uracil: step 1/1. Its activity is regulated as follows. Allosterically activated by GTP. Catalyzes the conversion of uracil and 5-phospho-alpha-D-ribose 1-diphosphate (PRPP) to UMP and diphosphate. This Methanococcus vannielii (strain ATCC 35089 / DSM 1224 / JCM 13029 / OCM 148 / SB) protein is Uracil phosphoribosyltransferase.